The following is a 223-amino-acid chain: Deoxyribose-phosphate aldolase (223 aa).

The active-site Proton donor/acceptor is the Asp91. Residue Lys153 is the Schiff-base intermediate with acetaldehyde of the active site. The active-site Proton donor/acceptor is Lys182.

It belongs to the DeoC/FbaB aldolase family. DeoC type 1 subfamily.

Its subcellular location is the cytoplasm. It carries out the reaction 2-deoxy-D-ribose 5-phosphate = D-glyceraldehyde 3-phosphate + acetaldehyde. Its pathway is carbohydrate degradation; 2-deoxy-D-ribose 1-phosphate degradation; D-glyceraldehyde 3-phosphate and acetaldehyde from 2-deoxy-alpha-D-ribose 1-phosphate: step 2/2. Its function is as follows. Catalyzes a reversible aldol reaction between acetaldehyde and D-glyceraldehyde 3-phosphate to generate 2-deoxy-D-ribose 5-phosphate. The sequence is that of Deoxyribose-phosphate aldolase from Streptococcus pyogenes serotype M2 (strain MGAS10270).